The primary structure comprises 301 residues: tRNA pseudouridine synthase B (301 aa).

Asp48 acts as the Nucleophile in catalysis.

It belongs to the pseudouridine synthase TruB family. Type 1 subfamily.

It carries out the reaction uridine(55) in tRNA = pseudouridine(55) in tRNA. Its function is as follows. Responsible for synthesis of pseudouridine from uracil-55 in the psi GC loop of transfer RNAs. This Mycobacterium ulcerans (strain Agy99) protein is tRNA pseudouridine synthase B.